The following is a 662-amino-acid chain: MNFPWDQLLVKGNWMITMAQIGAPFLVIGLIAVITYFKLWKYLYKEWFTSVDHKKIGLMYLICAVLMFVRGGIDALLLRTQLTIPDNTFLESNHYNEIFSTHGVIMIIFMAMPFVFGLWNVVVPLQIGARDVAFPVMNNISFWLFFVGMILFNLSFIIGGSPAAGWTNYAPLAGEFSPGPGVNYYLVAIQISGIGTLMTGINFFVTILRCKTPTMKFMQMPMFTVTTFITTLIVILAFPVFTVVLALMTFDRVFGTAFFTVADGGMPMLWANFFWVWGHPEVYIVILPAFGIYSEIIPTFARKRLFGHQSMVWATAGIAFLSFLVWVHHFFTMGNGALINSFFSISTMLIGVPTGVKLFNWLLTLYKGRITFESPMLFSLAFIPNFLLGGVTGVMLAMASADYQYHNTYFLVAHFHYTLVTGVVFACLAGLIFWYPKMMGYKLNEKLNAWCFWLFMIGFNVCFLPQFILGLDGMPRRLYTYMPSDGWWLLNVISTIGALLMAVGFLFLVVSIVYSHIKAPREATGDNWDGLGRTLEWSTASAIPPKYNFAITPDWNDYDTFVDMKEHGRHYLDNHNYKDIHMPNNTHTGVIMGIFMLLGGFFLIFETVIPAAICLVGILGSLVYQSFVQDHGYHIPASEVAENEARLREARIKEREAVGHES.

2 helical membrane passes run 14–34 and 58–78; these read WMIT…IAVI and LMYL…ALLL. Position 102 (H102) interacts with Fe(II)-heme a. Transmembrane regions (helical) follow at residues 103-123, 140-160, 187-207, 228-248, 273-293, 311-331, 336-356, and 376-396; these read GVIM…NVVV, ISFW…IIGG, VAIQ…FVTI, FITT…LALM, FFWV…FGIY, MVWA…HHFF, GALI…PTGV, and MLFS…GVML. The Cu cation site is built by H279, Y283, H328, and H329. Positions 279 to 283 form a cross-link, 1'-histidyl-3'-tyrosine (His-Tyr); it reads HPEVY. Position 414 (H414) interacts with heme a3. 5 consecutive transmembrane segments (helical) span residues 415 to 435, 451 to 471, 492 to 512, 586 to 605, and 609 to 628; these read FHYT…IFWY, CFWL…ILGL, VIST…VVSI, THTG…FLIF, and IPAA…QSFV. Residue H416 coordinates Fe(II)-heme a.

This sequence belongs to the heme-copper respiratory oxidase family. Cu cation serves as cofactor. Requires ferriheme a as cofactor. The cofactor is Heme A3..

It localises to the cell membrane. It carries out the reaction 2 a quinol + O2 = 2 a quinone + 2 H2O. The protein operates within energy metabolism; oxidative phosphorylation. Its function is as follows. Catalyzes quinol oxidation with the concomitant reduction of oxygen to water. The protein is Probable quinol oxidase subunit 1 (qoxB) of Staphylococcus haemolyticus (strain JCSC1435).